The following is a 144-amino-acid chain: Protein BUD31 homolog (144 aa).

A Nuclear localization signal motif is present at residues 2-10; sequence PKVRRSRKP.

Belongs to the BUD31 (G10) family.

The protein localises to the nucleus. This Branchiostoma belcheri (Amphioxus) protein is Protein BUD31 homolog.